We begin with the raw amino-acid sequence, 235 residues long: Pyridoxine 5'-phosphate synthase (235 aa).

Asn-6 serves as a coordination point for 3-amino-2-oxopropyl phosphate. 8–9 (DH) is a 1-deoxy-D-xylulose 5-phosphate binding site. Arg-17 is a 3-amino-2-oxopropyl phosphate binding site. The active-site Proton acceptor is the His-42. 2 residues coordinate 1-deoxy-D-xylulose 5-phosphate: Arg-44 and His-49. The active-site Proton acceptor is Glu-69. Thr-99 lines the 1-deoxy-D-xylulose 5-phosphate pocket. The active-site Proton donor is His-189. Residues Gly-190 and 211–212 (GH) contribute to the 3-amino-2-oxopropyl phosphate site.

The protein belongs to the PNP synthase family. As to quaternary structure, homooctamer; tetramer of dimers.

The protein localises to the cytoplasm. The enzyme catalyses 3-amino-2-oxopropyl phosphate + 1-deoxy-D-xylulose 5-phosphate = pyridoxine 5'-phosphate + phosphate + 2 H2O + H(+). The protein operates within cofactor biosynthesis; pyridoxine 5'-phosphate biosynthesis; pyridoxine 5'-phosphate from D-erythrose 4-phosphate: step 5/5. Catalyzes the complicated ring closure reaction between the two acyclic compounds 1-deoxy-D-xylulose-5-phosphate (DXP) and 3-amino-2-oxopropyl phosphate (1-amino-acetone-3-phosphate or AAP) to form pyridoxine 5'-phosphate (PNP) and inorganic phosphate. This chain is Pyridoxine 5'-phosphate synthase, found in Chlorobium luteolum (strain DSM 273 / BCRC 81028 / 2530) (Pelodictyon luteolum).